We begin with the raw amino-acid sequence, 248 residues long: Probable cyclic nucleotide phosphodiesterase CBUA0032 (248 aa).

Residues aspartate 13, histidine 15, aspartate 52, asparagine 82, histidine 152, histidine 191, and histidine 193 each coordinate Fe cation. Residues histidine 15, aspartate 52, and 82 to 83 (NH) contribute to the AMP site. AMP is bound at residue histidine 193.

It belongs to the cyclic nucleotide phosphodiesterase class-III family. The cofactor is Fe(2+).

This chain is Probable cyclic nucleotide phosphodiesterase CBUA0032, found in Coxiella burnetii (strain RSA 493 / Nine Mile phase I).